A 624-amino-acid chain; its full sequence is 1-deoxy-D-xylulose-5-phosphate synthase (624 aa).

Thiamine diphosphate contacts are provided by residues H80 and 121 to 123 (GHS). D152 serves as a coordination point for Mg(2+). Residues 153 to 154 (GA), N181, Y289, and E371 each bind thiamine diphosphate. Residue N181 participates in Mg(2+) binding.

It belongs to the transketolase family. DXPS subfamily. Homodimer. It depends on Mg(2+) as a cofactor. Requires thiamine diphosphate as cofactor.

The catalysed reaction is D-glyceraldehyde 3-phosphate + pyruvate + H(+) = 1-deoxy-D-xylulose 5-phosphate + CO2. It participates in metabolic intermediate biosynthesis; 1-deoxy-D-xylulose 5-phosphate biosynthesis; 1-deoxy-D-xylulose 5-phosphate from D-glyceraldehyde 3-phosphate and pyruvate: step 1/1. Functionally, catalyzes the acyloin condensation reaction between C atoms 2 and 3 of pyruvate and glyceraldehyde 3-phosphate to yield 1-deoxy-D-xylulose-5-phosphate (DXP). This Blochmanniella pennsylvanica (strain BPEN) protein is 1-deoxy-D-xylulose-5-phosphate synthase.